A 621-amino-acid chain; its full sequence is NADPH-dependent diflavin oxidoreductase 1 (621 aa).

One can recognise a Flavodoxin-like domain in the interval Ile-6–Ile-168. FMN is bound by residues Ser-12–Ala-17, Ser-59–Gly-62, Leu-106–Asn-115, and Glu-142. The region spanning Lys-224 to Leu-489 is the FAD-binding FR-type domain. FAD is bound by residues Arg-381, Arg-411–Ser-414, and Gly-443–Thr-446. Residues Ser-536–Arg-537 and Thr-545–Gln-549 each bind NADP(+). Trp-621 provides a ligand contact to FAD.

Belongs to the NADPH-dependent diflavin oxidoreductase NDOR1 family. This sequence in the N-terminal section; belongs to the flavodoxin family. The protein in the C-terminal section; belongs to the flavoprotein pyridine nucleotide cytochrome reductase family. In terms of assembly, interacts with DRE2; as part of the cytosolic iron-sulfur (Fe-S) protein assembly (CIA) machinery. FAD serves as cofactor. FMN is required as a cofactor.

The protein resides in the cytoplasm. It is found in the mitochondrion. The catalysed reaction is 2 oxidized [2Fe-2S]-[protein] + NADPH = 2 reduced [2Fe-2S]-[protein] + NADP(+) + H(+). NADPH-dependent reductase which is a central component of the cytosolic iron-sulfur (Fe-S) protein assembly (CIA) machinery. Transfers electrons from NADPH via its FAD and FMN prosthetic groups to the [2Fe-2S] cluster of DRE2, another key component of the CIA machinery. In turn, this reduced cluster provides electrons for assembly of cytosolic iron-sulfur cluster proteins. Positively controls H(2)O(2)-induced cell death. The chain is NADPH-dependent diflavin oxidoreductase 1 from Candida glabrata (strain ATCC 2001 / BCRC 20586 / JCM 3761 / NBRC 0622 / NRRL Y-65 / CBS 138) (Yeast).